The following is a 229-amino-acid chain: Small ribosomal subunit protein uS3 (229 aa).

The KH type-2 domain maps to 39–107; it reads VRKFLEKKLK…PAQINIAEIR (69 aa).

This sequence belongs to the universal ribosomal protein uS3 family. As to quaternary structure, part of the 30S ribosomal subunit. Forms a tight complex with proteins S10 and S14.

Its function is as follows. Binds the lower part of the 30S subunit head. Binds mRNA in the 70S ribosome, positioning it for translation. This Shewanella loihica (strain ATCC BAA-1088 / PV-4) protein is Small ribosomal subunit protein uS3.